The following is a 295-amino-acid chain: Protoheme IX farnesyltransferase (295 aa).

A run of 9 helical transmembrane segments spans residues 24–44, 45–65, 94–114, 117–137, 144–164, 171–191, 216–236, 240–260, and 272–292; these read IMYL…GSMH, PFLA…AGAI, SALE…AIAV, ISAA…TIWL, NIVI…AAVT, SFIL…ALSL, KYIL…ALFL, LLYL…AVSV, and MFSY…FCSI.

Belongs to the UbiA prenyltransferase family. Protoheme IX farnesyltransferase subfamily.

Its subcellular location is the cell membrane. The enzyme catalyses heme b + (2E,6E)-farnesyl diphosphate + H2O = Fe(II)-heme o + diphosphate. The protein operates within porphyrin-containing compound metabolism; heme O biosynthesis; heme O from protoheme: step 1/1. Functionally, converts heme B (protoheme IX) to heme O by substitution of the vinyl group on carbon 2 of heme B porphyrin ring with a hydroxyethyl farnesyl side group. This is Protoheme IX farnesyltransferase from Wolbachia pipientis wMel.